A 781-amino-acid chain; its full sequence is Matrix non-peptidase homolog 1 (781 aa).

Residues 1-27 (MTPPPASPSKKAKSSWLLIALIAVIIG) form the signal peptide. Residue Asn-54 is glycosylated (N-linked (GlcNAc...) asparagine). Residues 63–94 (TSKATVSTTTTQSATTPSTTTTRIEETTTTTS) are compositionally biased toward low complexity. The segment at 63 to 113 (TSKATVSTTTTQSATTPSTTTTRIEETTTTTSGAFDESVKNSEASTSTIPT) is disordered. N-linked (GlcNAc...) asparagine glycans are attached at residues Asn-183, Asn-341, Asn-375, and Asn-520.

The chain is Matrix non-peptidase homolog 1 (mnp-1) from Caenorhabditis elegans.